The chain runs to 187 residues: Protein GrpE (187 aa).

This sequence belongs to the GrpE family. In terms of assembly, homodimer.

Its subcellular location is the cytoplasm. In terms of biological role, participates actively in the response to hyperosmotic and heat shock by preventing the aggregation of stress-denatured proteins, in association with DnaK and GrpE. It is the nucleotide exchange factor for DnaK and may function as a thermosensor. Unfolded proteins bind initially to DnaJ; upon interaction with the DnaJ-bound protein, DnaK hydrolyzes its bound ATP, resulting in the formation of a stable complex. GrpE releases ADP from DnaK; ATP binding to DnaK triggers the release of the substrate protein, thus completing the reaction cycle. Several rounds of ATP-dependent interactions between DnaJ, DnaK and GrpE are required for fully efficient folding. The sequence is that of Protein GrpE from Albidiferax ferrireducens (strain ATCC BAA-621 / DSM 15236 / T118) (Rhodoferax ferrireducens).